A 154-amino-acid polypeptide reads, in one-letter code: UPF0756 membrane protein BLi03063/BL00400 (154 aa).

Helical transmembrane passes span Phe-8–Val-28, Trp-54–Phe-74, Trp-87–Leu-107, and Leu-117–Ile-137.

Belongs to the UPF0756 family.

Its subcellular location is the cell membrane. The chain is UPF0756 membrane protein BLi03063/BL00400 from Bacillus licheniformis (strain ATCC 14580 / DSM 13 / JCM 2505 / CCUG 7422 / NBRC 12200 / NCIMB 9375 / NCTC 10341 / NRRL NRS-1264 / Gibson 46).